The following is a 311-amino-acid chain: Apolipoprotein E (311 aa).

The first 18 residues, 1 to 18 (MKVWWAVLAAAILAGCRA), serve as a signal peptide directing secretion. 8 consecutive repeat copies span residues 74 to 95 (MLME…EQLS), 96 to 116 (PMAQ…GALE), 117 to 138 (ADME…AMLG), 139 to 160 (QSTE…KRLL), 161 to 182 (RDAE…EGAE), 183 to 204 (RGVS…LRVA), 205 to 226 (TVGT…ERLR), and 227 to 248 (GHLE…EQVE). The segment at 74–248 (MLMEETMKEV…RLNEVREQVE (175 aa)) is 8 X 22 AA approximate tandem repeats. Methionine 136 bears the Methionine sulfoxide mark. At serine 140 the chain carries Phosphoserine. Residues 151–161 (HLRKLRKRLLR) are LDL and other lipoprotein receptors binding. 155–158 (LRKR) is a heparin binding site. The segment at 203–283 (VATVGTLAGR…SWFEPLVEDM (81 aa)) is lipid-binding and lipoprotein association. An O-linked (GalNAc...) threonine glycan is attached at threonine 205. 222–229 (GERLRGHL) provides a ligand contact to heparin. The homooligomerization stretch occupies residues 259 to 311 (PQMRLQAEAFQARLKSWFEPLVEDMQRQWAGLVEKLQAAMPSKAPAAAPIENQ). The interval 271 to 283 (RLKSWFEPLVEDM) is specificity for association with VLDL.

It belongs to the apolipoprotein A1/A4/E family. In terms of assembly, homotetramer. May interact with ABCA1; functionally associated with ABCA1 in the biogenesis of HDLs. May interact with APP/A4 amyloid-beta peptide; the interaction is extremely stable in vitro but its physiological significance is unclear. May interact with MAPT. May interact with MAP2. In the cerebrospinal fluid, interacts with secreted SORL1. Interacts with PMEL; this allows the loading of PMEL luminal fragment on ILVs to induce fibril nucleation. In terms of processing, APOE exists as multiple glycosylated and sialylated glycoforms within cells and in plasma. The extent of glycosylation and sialylation are tissue and context specific. Glycated in plasma VLDL. Post-translationally, phosphorylated by FAM20C in the extracellular medium.

Its subcellular location is the secreted. The protein resides in the extracellular space. The protein localises to the extracellular matrix. It is found in the extracellular vesicle. It localises to the endosome. Its subcellular location is the multivesicular body. APOE is an apolipoprotein, a protein associating with lipid particles, that mainly functions in lipoprotein-mediated lipid transport between organs via the plasma and interstitial fluids. APOE is a core component of plasma lipoproteins and is involved in their production, conversion and clearance. Apolipoproteins are amphipathic molecules that interact both with lipids of the lipoprotein particle core and the aqueous environment of the plasma. As such, APOE associates with chylomicrons, chylomicron remnants, very low density lipoproteins (VLDL) and intermediate density lipoproteins (IDL) but shows a preferential binding to high-density lipoproteins (HDL). It also binds a wide range of cellular receptors including the LDL receptor/LDLR and the very low-density lipoprotein receptor/VLDLR that mediate the cellular uptake of the APOE-containing lipoprotein particles. Finally, APOE also has a heparin-binding activity and binds heparan-sulfate proteoglycans on the surface of cells, a property that supports the capture and the receptor-mediated uptake of APOE-containing lipoproteins by cells. In Oryctolagus cuniculus (Rabbit), this protein is Apolipoprotein E (APOE).